A 720-amino-acid polypeptide reads, in one-letter code: Engulfment and cell motility protein 2 (720 aa).

The residue at position 48 (Tyr48) is a Phosphotyrosine. The ELMO domain maps to 310–484; the sequence is QAQRDIIFEL…QVVREQITRA (175 aa). Ser503 carries the post-translational modification Phosphoserine. The 122-residue stretch at 553–674 folds into the PH domain; that stretch reads SSFRKIGNRR…LLGKDMSSEL (122 aa). Residues 700–707 carry the SH3-binding motif; it reads PEAPPPVP. Tyr717 carries the post-translational modification Phosphotyrosine.

In terms of assembly, interacts directly with the SH3-domain of DOCK1 via its SH3-binding site. Probably forms a heterotrimeric complex with DOCK1 and RAC1. Interacts with ARHGEF16, DOCK4 and EPHA2; mediates activation of RAC1 by EPHA2. Interacts with ADGRB3. Interacts with AUTS2; the interaction is direct.

The protein localises to the cytoplasm. Its subcellular location is the cytosol. The protein resides in the membrane. In terms of biological role, involved in cytoskeletal rearrangements required for phagocytosis of apoptotic cells and cell motility. Acts in association with DOCK1 and CRK. Was initially proposed to be required in complex with DOCK1 to activate Rac Rho small GTPases. May enhance the guanine nucleotide exchange factor (GEF) activity of DOCK1. This is Engulfment and cell motility protein 2 (ELMO2) from Bos taurus (Bovine).